The primary structure comprises 268 residues: Hydroxyacylglutathione hydrolase (268 aa).

Residues H56, H58, D60, H61, H113, D130, and H168 each contribute to the Zn(2+) site.

It belongs to the metallo-beta-lactamase superfamily. Glyoxalase II family. In terms of assembly, monomer. It depends on Zn(2+) as a cofactor.

It carries out the reaction an S-(2-hydroxyacyl)glutathione + H2O = a 2-hydroxy carboxylate + glutathione + H(+). Its pathway is secondary metabolite metabolism; methylglyoxal degradation; (R)-lactate from methylglyoxal: step 2/2. In terms of biological role, thiolesterase that catalyzes the hydrolysis of S-D-lactoyl-glutathione to form glutathione and D-lactic acid. In Hydrogenovibrio crunogenus (strain DSM 25203 / XCL-2) (Thiomicrospira crunogena), this protein is Hydroxyacylglutathione hydrolase.